Here is a 149-residue protein sequence, read N- to C-terminus: Large ribosomal subunit protein bL9 (149 aa).

This sequence belongs to the bacterial ribosomal protein bL9 family.

Binds to the 23S rRNA. This is Large ribosomal subunit protein bL9 from Aliivibrio salmonicida (strain LFI1238) (Vibrio salmonicida (strain LFI1238)).